The chain runs to 196 residues: Interleukin-18 (196 aa).

The propeptide occupies 1–29 (MSCEEIAVCAVRLRENLCLYFEELECDAF).

This sequence belongs to the IL-1 family. Forms a ternary complex with ligand-binding receptor subunit IL18R1 and signaling receptor subunit IL18RAP at the plasma membrane. Mature IL18 first binds to IL18R1 forming a low affinity binary complex, which then interacts with IL18RAP to form a high affinity ternary complex that signals inside the cell. Interacts with cargo receptor TMED10; the interaction mediates the translocation from the cytoplasm into the ERGIC (endoplasmic reticulum-Golgi intermediate compartment) and thereby secretion. The pro-IL-18 precursor is processed by CASP1 or CASP4 to yield the active form.

Its subcellular location is the cytoplasm. It localises to the secreted. Augments natural killer cell activity in spleen cells and stimulates interferon gamma production in T-helper type I cells. Involved in transduction of inflammation downstream of pyroptosis: its mature form is specifically released in the extracellular milieu by passing through the gasdermin-D (GSDMD) pore. The chain is Interleukin-18 (IL18) from Gallus gallus (Chicken).